A 489-amino-acid chain; its full sequence is UDP-N-acetylmuramate--L-alanine ligase (489 aa).

128-134 (GTHGKTT) provides a ligand contact to ATP.

The protein belongs to the MurCDEF family.

It localises to the cytoplasm. It carries out the reaction UDP-N-acetyl-alpha-D-muramate + L-alanine + ATP = UDP-N-acetyl-alpha-D-muramoyl-L-alanine + ADP + phosphate + H(+). It participates in cell wall biogenesis; peptidoglycan biosynthesis. Its function is as follows. Cell wall formation. The polypeptide is UDP-N-acetylmuramate--L-alanine ligase (Shewanella sediminis (strain HAW-EB3)).